The sequence spans 197 residues: Stanniocalcin-2 (197 aa).

Positions 1–20 are disordered; the sequence is TDAXNPPEGPQDRGSQQKGR.

It belongs to the stanniocalcin family. In terms of assembly, homodimer; disulfide-linked.

The protein localises to the secreted. Its function is as follows. Has an anti-hypocalcemic action on calcium and phosphate homeostasis. The polypeptide is Stanniocalcin-2 (STC2) (Cavia porcellus (Guinea pig)).